The sequence spans 343 residues: RNA-binding protein 43 (343 aa).

An RRM domain is found at 15 to 90; it reads RTVVVSGLPV…PLLTVSHFSE (76 aa). The disordered stretch occupies residues 170–200; that stretch reads RRNWTGQNPRRVLQKNENSAPTLGTSVPEPA. Over residues 184 to 194 the composition is skewed to polar residues; sequence KNENSAPTLGT.

The chain is RNA-binding protein 43 (Rbm43) from Rattus norvegicus (Rat).